Reading from the N-terminus, the 166-residue chain is UPF0561 protein C2orf68 homolog (166 aa).

Basic and acidic residues predominate over residues 36-49 (RDDYDKKVKQAAKE). Residues 36-108 (RDDYDKKVKQ…EPEPPGHQLF (73 aa)) are disordered.

The protein belongs to the UPF0561 family.

The sequence is that of UPF0561 protein C2orf68 homolog from Bos taurus (Bovine).